A 132-amino-acid polypeptide reads, in one-letter code: MWNEFKKFAFKGNVVDLAVGVVIGAAFGKIVSSLVKDIITPLLGMVLGGVNFTDLHFGYGKSAVMYGNFIQTIFDFLIIAASIFMFIKVFNKLTSKKEDEKEEEIPEPTKEEVLLGEIRDLLKQQNSSKDRA.

The next 3 helical transmembrane spans lie at valine 14–leucine 34, isoleucine 38–glycine 58, and glycine 67–isoleucine 87.

The protein belongs to the MscL family. In terms of assembly, homopentamer.

The protein resides in the cell membrane. Functionally, channel that opens in response to stretch forces in the membrane lipid bilayer. May participate in the regulation of osmotic pressure changes within the cell. This chain is Large-conductance mechanosensitive channel, found in Bacillus cereus (strain G9842).